A 280-amino-acid chain; its full sequence is Aspartate/glutamate leucyltransferase (280 aa).

This sequence belongs to the R-transferase family. Bpt subfamily.

It is found in the cytoplasm. It carries out the reaction N-terminal L-glutamyl-[protein] + L-leucyl-tRNA(Leu) = N-terminal L-leucyl-L-glutamyl-[protein] + tRNA(Leu) + H(+). It catalyses the reaction N-terminal L-aspartyl-[protein] + L-leucyl-tRNA(Leu) = N-terminal L-leucyl-L-aspartyl-[protein] + tRNA(Leu) + H(+). Functionally, functions in the N-end rule pathway of protein degradation where it conjugates Leu from its aminoacyl-tRNA to the N-termini of proteins containing an N-terminal aspartate or glutamate. The sequence is that of Aspartate/glutamate leucyltransferase from Cereibacter sphaeroides (strain KD131 / KCTC 12085) (Rhodobacter sphaeroides).